The following is a 315-amino-acid chain: Small ribosomal subunit protein uS2 (315 aa).

A disordered region spans residues 241–315; sequence AQHGEERRPG…QPAPGSDANR (75 aa). Basic and acidic residues predominate over residues 243-288; the sequence is HGEERRPGEEDRDAASERGQKDRRDRRDRRGGGRDRERREPREDRA.

It belongs to the universal ribosomal protein uS2 family.

The sequence is that of Small ribosomal subunit protein uS2 from Anaeromyxobacter sp. (strain Fw109-5).